The chain runs to 222 residues: 7-cyano-7-deazaguanine synthase (222 aa).

14–24 (FSGGQDSTTCL) lines the ATP pocket. 4 residues coordinate Zn(2+): cysteine 190, cysteine 199, cysteine 202, and cysteine 205.

This sequence belongs to the QueC family. In terms of assembly, homodimer. Zn(2+) serves as cofactor.

The catalysed reaction is 7-carboxy-7-deazaguanine + NH4(+) + ATP = 7-cyano-7-deazaguanine + ADP + phosphate + H2O + H(+). It functions in the pathway purine metabolism; 7-cyano-7-deazaguanine biosynthesis. In terms of biological role, catalyzes the ATP-dependent conversion of 7-carboxy-7-deazaguanine (CDG) to 7-cyano-7-deazaguanine (preQ(0)). The sequence is that of 7-cyano-7-deazaguanine synthase from Staphylococcus aureus (strain bovine RF122 / ET3-1).